Here is a 135-residue protein sequence, read N- to C-terminus: Large ribosomal subunit protein eL27z (135 aa).

It belongs to the eukaryotic ribosomal protein eL27 family.

This chain is Large ribosomal subunit protein eL27z (RPL27A), found in Arabidopsis thaliana (Mouse-ear cress).